Here is a 1036-residue protein sequence, read N- to C-terminus: Mitogen-activated protein kinase kinase kinase 21 (1036 aa).

The segment at 1-36 (MALRGAAGATDTPVSSAGGAPGGSASSSSTSSGGSA) is disordered. Low complexity predominate over residues 15-36 (SSAGGAPGGSASSSSTSSGGSA). Residues 38-102 (AGAGLWAALY…PANYVAPCRP (65 aa)) enclose the SH3 domain. Residues 124–401 (LELKELIGAG…ALILEQLTAI (278 aa)) enclose the Protein kinase domain. Residues 130 to 138 (IGAGGFGQV) and K151 each bind ATP. D263 functions as the Proton acceptor in the catalytic mechanism. At T299 the chain carries Phosphothreonine; by autocatalysis. S303 bears the Phosphoserine; by autocatalysis and MAP4K1 mark. 2 leucine-zipper regions span residues 425 to 446 (IQQM…EEEL) and 460 to 481 (LKRR…ELNI). Residues 517–551 (SDFQHKITVQASPNLDKRRSLNSSSSSPPSSPTMM) are disordered. Phosphoserine is present on residues S528, S543, and S547. T592 is modified (phosphothreonine). A Phosphoserine modification is found at S614. A compositionally biased stretch (basic and acidic residues) spans 748–763 (AEEPLPKEEKKKREGI). Disordered stretches follow at residues 748 to 791 (AEEP…SSPP) and 923 to 954 (PHSH…RSRS).

Belongs to the protein kinase superfamily. STE Ser/Thr protein kinase family. MAP kinase kinase kinase subfamily. In terms of assembly, homodimer. Interacts with TLR4. The cofactor is Mg(2+). In terms of processing, autophosphorylation on serine and threonine residues within the activation loop plays a role in enzyme activation.

The enzyme catalyses L-seryl-[protein] + ATP = O-phospho-L-seryl-[protein] + ADP + H(+). It catalyses the reaction L-threonyl-[protein] + ATP = O-phospho-L-threonyl-[protein] + ADP + H(+). With respect to regulation, homodimerization via the leucine zipper domains is required for autophosphorylation and subsequent activation. Negative regulator of TLR4 signaling. Does not activate JNK1/MAPK8 pathway, p38/MAPK14, nor ERK2/MAPK1 pathways. This Homo sapiens (Human) protein is Mitogen-activated protein kinase kinase kinase 21.